A 325-amino-acid chain; its full sequence is Aminotransferase tasG (325 aa).

Substrate is bound at residue glycine 35. Pyridoxal 5'-phosphate is bound by residues 89 to 90 (TW), asparagine 143, tyrosine 174, and 203 to 205 (SFA). Asparagine 143 lines the substrate pocket. An N6-(pyridoxal phosphate)lysine modification is found at lysine 206. Residue arginine 214 participates in pyridoxal 5'-phosphate binding.

This sequence belongs to the class-I pyridoxal-phosphate-dependent aminotransferase family. Homodimer. The cofactor is pyridoxal 5'-phosphate.

The protein operates within secondary metabolite biosynthesis. Its function is as follows. Aminotransferase; part of the gene cluster that mediates the biosynthesis of the tetramic acids Sch210971 and Sch210972, potential anti-HIV fungal natural product that contain a decalin core. The PKS module of tasS together with the enoylreductase tasC catalyze the formation of the polyketide unit which is then conjugated to 4-hydroxyl-4-methyl glutamate (HMG) by the condensation domain of the tasS NRPS module. One unique structural feature of Sch210971 and Sch210972 is the tetramic acid motif proposed to be derived from the non-proteinogenic amino acid HMG, by a Dieckmann-type condensation catalyzed by the reductase domain of tasS. The aldolase tasA catalyzes the aldol condensation of 2 molecules of pyruvic acid to yield the intermediate 4-hydroxyl-4-methyl-2-oxoglutarate (HMOG), which can then be stereoselectively transaminated, may be by tasG, to form HMG. The Diels-Alderase tas3 then uses the Dieckmann product of tasS as substrate and catalyzes the Diels-Alder cycloaddition to form the decalin ring of Sch210971 and Sch210972. The sequence is that of Aminotransferase tasG from Hapsidospora irregularis.